The following is a 507-amino-acid chain: Alkyl hydroperoxide reductase subunit F (507 aa).

207–222 (DVLIVGGGPASGSAAI) serves as a coordination point for FAD. A disulfide bond links Cys335 and Cys338. 347–361 (DVAVIGGGNSGVEAA) is a binding site for NAD(+). Position 467–477 (467–477 (TNVPGIFAAGD)) interacts with FAD.

It belongs to the class-II pyridine nucleotide-disulfide oxidoreductase family. As to quaternary structure, homodimer. It depends on FAD as a cofactor.

Its function is as follows. Serves to protect the cell against DNA damage by alkyl hydroperoxides. It can use either NADH or NADPH as electron donor for direct reduction of redox dyes or of alkyl hydroperoxides when combined with the AhpC protein. The chain is Alkyl hydroperoxide reductase subunit F (ahpF) from Staphylococcus aureus (strain MRSA252).